The chain runs to 118 residues: MARVKRGTIARARHKKVLKQAKGYYGARSRVYRVAVQAVTKAGQYAYRDRRQRKRQFRQLWIARINAAARQNGMSYSRFINGLKKASVEIDRKILADIAVHDKAAFSALVEAAKGALA.

Belongs to the bacterial ribosomal protein bL20 family.

Binds directly to 23S ribosomal RNA and is necessary for the in vitro assembly process of the 50S ribosomal subunit. It is not involved in the protein synthesizing functions of that subunit. In Alteromonas mediterranea (strain DSM 17117 / CIP 110805 / LMG 28347 / Deep ecotype), this protein is Large ribosomal subunit protein bL20.